Consider the following 120-residue polypeptide: MVALNTLSAVSAALLVLAASPSPASARSLDASPSSAFSGNHSLSKRSLFDPACTGIYDRQLLGKLGRLCDDCYNVFREPKVATGCRSNCYYNLIFLDCLEYLIPSHLQEEHMEALQTVGK.

An N-terminal signal peptide occupies residues 1–26 (MVALNTLSAVSAALLVLAASPSPASA). 3 disulfides stabilise this stretch: cysteine 53–cysteine 89, cysteine 69–cysteine 85, and cysteine 72–cysteine 98. Valine 118 is modified (valine amide).

Belongs to the arthropod CHH/MIH/GIH/VIH hormone family.

It localises to the secreted. Its function is as follows. Hormone found in the sinus gland of isopods and decapods which controls the blood sugar level. Has a secretagogue action over the amylase released from the midgut gland. May act as a stress hormone and may be involved in the control of molting and reproduction. The protein is Crustacean hyperglycemic hormones 4 (CHH4) of Penaeus monodon (Giant tiger prawn).